Reading from the N-terminus, the 294-residue chain is Acetylglutamate kinase (294 aa).

Substrate is bound by residues Gly63–Gly64, Arg85, and Asn188.

It belongs to the acetylglutamate kinase family. ArgB subfamily.

It is found in the cytoplasm. The catalysed reaction is N-acetyl-L-glutamate + ATP = N-acetyl-L-glutamyl 5-phosphate + ADP. It functions in the pathway amino-acid biosynthesis; L-arginine biosynthesis; N(2)-acetyl-L-ornithine from L-glutamate: step 2/4. Catalyzes the ATP-dependent phosphorylation of N-acetyl-L-glutamate. The sequence is that of Acetylglutamate kinase from Methanococcus maripaludis (strain C7 / ATCC BAA-1331).